A 164-amino-acid polypeptide reads, in one-letter code: MADTDDIIDYESDDLTEYEDDDEEEEDGESLETSDIDPKSSYKIVESASTHIEDAHSNLKHIGNHISALKRRYTRRISLFEIAGIIAESYNLLQRGRLPLVSEFSNETMKQNMLHVIIQEIEEGSCPIVIEKNGELLSVNDFDKDGLKFHLDYIIKIWKLQKRY.

Positions M1–D35 are enriched in acidic residues. The segment at M1–K39 is disordered.

The protein belongs to the poxviridae DNA-directed RNA polymerase 19 kDa subunit family. As to quaternary structure, the DNA-dependent RNA polymerase used for intermediate and late genes expression consists of eight subunits Rpo30/OPG66, Rpo7/OPG90, Rpo22/OPG103, Rpo147/OPG105, Rpo18/OPG119, Rpo19/OPG131, Rpo132/OPG151 and Rpo35/OPG156. The same holoenzyme, with the addition of the transcription-specificity factor OPG109, is used for early gene expression.

The protein localises to the virion. The catalysed reaction is RNA(n) + a ribonucleoside 5'-triphosphate = RNA(n+1) + diphosphate. Part of the DNA-dependent RNA polymerase which catalyzes the transcription of viral DNA into RNA using the four ribonucleoside triphosphates as substrates. Responsible for the transcription of early, intermediate and late genes. DNA-dependent RNA polymerase associates with the early transcription factor (ETF), itself composed of OPG118 and OPG133, thereby allowing the early genes transcription. Late transcription, and probably also intermediate transcription, require newly synthesized RNA polymerase. The sequence is that of DNA-directed RNA polymerase 19 kDa subunit (OPG131) from Variola virus (isolate Human/India/Ind3/1967) (VARV).